The chain runs to 505 residues: MTAPKPVVLCILDGWGLDPDGPANAPLLADTPVMDRLMATCPNATLTTFGPDVGLPSGQMGNSEVGHTNIGAGRVVAMDLGQIDLAIEDGSFARNPALTGFIDRLKSSGGTAHLMGVASDGGVHGHTDHIIAAAKAVAGAGVPVVLHAITDGRDVAPKSADRFMPALEAALPEGARIGTVIGRYYAMDRDNRWDRVARAFVAMVRAQGETAESAQAAVAAAYGRGETDEFIAPTVIGGYAGMRDGDGIFCLNFRADRAREILRAMAQPDFDAFDPAGLPDFAAKLGMVSYSDEHDGWFDIVFPKREIVNTLGAWVAKQGLRQFRLAETEKYPHVTFFLNGGQETPETGEDRFMPDSPKVATYDLQPEMSAEEVSDSFVAAIEAGYDLIVVNYANPDMVGHTGDLEAAKAACTAVDTGLGRALAALEVAGGAMIVTADHGNCETMIDPETGGTHTAHTLNPVPVILVGGPEGATLAPGRLADLAPTILHLMHLPQPVEMTGRSLIR.

Positions 13 and 63 each coordinate Mn(2+). S63 acts as the Phosphoserine intermediate in catalysis. Substrate is bound by residues H124, 153-154, R183, R189, 254-257, and K330; these read RD and RADR. D396, H400, D437, H438, and H456 together coordinate Mn(2+).

This sequence belongs to the BPG-independent phosphoglycerate mutase family. In terms of assembly, monomer. Requires Mn(2+) as cofactor.

It catalyses the reaction (2R)-2-phosphoglycerate = (2R)-3-phosphoglycerate. It participates in carbohydrate degradation; glycolysis; pyruvate from D-glyceraldehyde 3-phosphate: step 3/5. Its function is as follows. Catalyzes the interconversion of 2-phosphoglycerate and 3-phosphoglycerate. In Dinoroseobacter shibae (strain DSM 16493 / NCIMB 14021 / DFL 12), this protein is 2,3-bisphosphoglycerate-independent phosphoglycerate mutase.